Here is a 430-residue protein sequence, read N- to C-terminus: Enolase (430 aa).

(2R)-2-phosphoglycerate is bound at residue glutamine 163. Glutamate 205 (proton donor) is an active-site residue. 3 residues coordinate Mg(2+): aspartate 242, glutamate 287, and aspartate 314. Residues lysine 339, arginine 368, serine 369, and lysine 390 each coordinate (2R)-2-phosphoglycerate. The active-site Proton acceptor is lysine 339.

The protein belongs to the enolase family. Requires Mg(2+) as cofactor.

The protein resides in the cytoplasm. Its subcellular location is the secreted. The protein localises to the cell surface. The catalysed reaction is (2R)-2-phosphoglycerate = phosphoenolpyruvate + H2O. It participates in carbohydrate degradation; glycolysis; pyruvate from D-glyceraldehyde 3-phosphate: step 4/5. Functionally, catalyzes the reversible conversion of 2-phosphoglycerate (2-PG) into phosphoenolpyruvate (PEP). It is essential for the degradation of carbohydrates via glycolysis. The polypeptide is Enolase (Bacillus licheniformis (strain ATCC 14580 / DSM 13 / JCM 2505 / CCUG 7422 / NBRC 12200 / NCIMB 9375 / NCTC 10341 / NRRL NRS-1264 / Gibson 46)).